Reading from the N-terminus, the 179-residue chain is Large ribosomal subunit protein uL5 (179 aa).

This sequence belongs to the universal ribosomal protein uL5 family. Part of the 50S ribosomal subunit; part of the 5S rRNA/L5/L18/L25 subcomplex. Contacts the 5S rRNA and the P site tRNA. Forms a bridge to the 30S subunit in the 70S ribosome.

Its function is as follows. This is one of the proteins that bind and probably mediate the attachment of the 5S RNA into the large ribosomal subunit, where it forms part of the central protuberance. In the 70S ribosome it contacts protein S13 of the 30S subunit (bridge B1b), connecting the 2 subunits; this bridge is implicated in subunit movement. Contacts the P site tRNA; the 5S rRNA and some of its associated proteins might help stabilize positioning of ribosome-bound tRNAs. This Solidesulfovibrio magneticus (strain ATCC 700980 / DSM 13731 / RS-1) (Desulfovibrio magneticus) protein is Large ribosomal subunit protein uL5.